We begin with the raw amino-acid sequence, 378 residues long: Ribosomal RNA large subunit methyltransferase G (378 aa).

This sequence belongs to the methyltransferase superfamily. RlmG family.

It is found in the cytoplasm. It carries out the reaction guanosine(1835) in 23S rRNA + S-adenosyl-L-methionine = N(2)-methylguanosine(1835) in 23S rRNA + S-adenosyl-L-homocysteine + H(+). Its function is as follows. Specifically methylates the guanine in position 1835 (m2G1835) of 23S rRNA. The sequence is that of Ribosomal RNA large subunit methyltransferase G from Escherichia coli O1:K1 / APEC.